We begin with the raw amino-acid sequence, 740 residues long: Ion-translocating oxidoreductase complex subunit C (740 aa).

4Fe-4S ferredoxin-type domains follow at residues 369–397 and 407–436; these read GEPQEEQSCIRCSACADACPADLLPQQLY and KATTHNIADCIECGACAWVCPSNIPLVQYF. Residues C377, C380, C383, C387, C416, C419, C422, and C426 each coordinate [4Fe-4S] cluster. The disordered stretch occupies residues 602 to 717; the sequence is KLEQQQANAE…PEEQVDPRKA (116 aa). 2 stretches are compositionally biased toward low complexity: residues 605–615 and 637–647; these read QQQANAEPEQQ.

Belongs to the 4Fe4S bacterial-type ferredoxin family. RnfC subfamily. The complex is composed of six subunits: RsxA, RsxB, RsxC, RsxD, RsxE and RsxG. Requires [4Fe-4S] cluster as cofactor.

It is found in the cell inner membrane. In terms of biological role, part of a membrane-bound complex that couples electron transfer with translocation of ions across the membrane. Required to maintain the reduced state of SoxR. The sequence is that of Ion-translocating oxidoreductase complex subunit C from Escherichia coli (strain ATCC 8739 / DSM 1576 / NBRC 3972 / NCIMB 8545 / WDCM 00012 / Crooks).